We begin with the raw amino-acid sequence, 78 residues long: Hainantoxin-XX.3 (78 aa).

The N-terminal stretch at 1–23 (MKSATLLALSFLLIASCFLICEA) is a signal peptide. Positions 24–47 (EHSRYEEHEILEENMGDVVNLEQR) are excised as a propeptide. 3 disulfides stabilise this stretch: C49–C62, C56–C66, and C61–C77.

The protein belongs to the hainantoxin family. 20 subfamily. Expressed by the venom gland.

It is found in the secreted. Putative ion channel inhibitor. This Cyriopagopus hainanus (Chinese bird spider) protein is Hainantoxin-XX.3.